An 84-amino-acid chain; its full sequence is Small ribosomal subunit protein bS20 (84 aa).

This sequence belongs to the bacterial ribosomal protein bS20 family.

Its function is as follows. Binds directly to 16S ribosomal RNA. The sequence is that of Small ribosomal subunit protein bS20 from Limosilactobacillus fermentum (strain NBRC 3956 / LMG 18251) (Lactobacillus fermentum).